Consider the following 341-residue polypeptide: Probable 2' cyclic ADP-D-ribose synthase TcpO (341 aa).

The TIR domain occupies 204–336 (KEYDIFVSHS…EIIHEILERI (133 aa)). Residues 213-214 (SS) and Lys-243 contribute to the NAD(+) site. The active site involves Glu-279.

The catalysed reaction is NAD(+) + H2O = ADP-D-ribose + nicotinamide + H(+). It carries out the reaction NAD(+) = 2'cADPR + nicotinamide + H(+). Functionally, NAD(+) hydrolase (NADase) that catalyzes cleavage of NAD(+) into ADP-D-ribose (ADPR) and nicotinamide. In addition to ADPR, also generates a cyclization variant of cyclic ADPR (cADPR), termed v-cADPR (probably 2'cADPR). The protein is Probable 2' cyclic ADP-D-ribose synthase TcpO of Methanobrevibacter olleyae.